A 186-amino-acid chain; its full sequence is Nucleoside diphosphate kinase 6 (186 aa).

6 residues coordinate ATP: Lys19, Phe68, Arg96, Thr102, Arg116, and Asn126. Residue His129 is the Pros-phosphohistidine intermediate of the active site.

The protein belongs to the NDK family. Mg(2+) is required as a cofactor. As to expression, expressed at a moderately low level in many tissues. Most abundant in kidney, prostate, ovary, intestine, and spleen.

It carries out the reaction a 2'-deoxyribonucleoside 5'-diphosphate + ATP = a 2'-deoxyribonucleoside 5'-triphosphate + ADP. The catalysed reaction is a ribonucleoside 5'-diphosphate + ATP = a ribonucleoside 5'-triphosphate + ADP. Functionally, major role in the synthesis of nucleoside triphosphates other than ATP. The ATP gamma phosphate is transferred to the NDP beta phosphate via a ping-pong mechanism, using a phosphorylated active-site intermediate. Inhibitor of p53-induced apoptosis. The polypeptide is Nucleoside diphosphate kinase 6 (NME6) (Homo sapiens (Human)).